The primary structure comprises 714 residues: Delta-like protein 1 (714 aa).

Residues 1–17 form the signal peptide; that stretch reads MGRRSALALAVVSALLC. The Extracellular segment spans residues 18-537; it reads QVWSSGVFEL…VAAQGGSFPW (520 aa). Residues 176–220 enclose the DSL domain; that stretch reads FVCDEHYYGEGCSVFCRPRDDAFGHFTCGERGEKMCDPGWKGQYC. Cystine bridges form between C178-C187, C191-C203, C211-C220, C225-C236, C229-C242, C244-C253, C256-C267, C262-C273, C275-C284, C291-C303, C297-C313, C315-C324, C331-C342, C336-C351, C353-C362, C369-C380, C374-C390, C392-C401, C408-C419, C413-C428, C430-C439, C446-C457, C451-C466, C468-C477, C484-C495, C489-C504, and C506-C515. 3 consecutive EGF-like domains span residues 225-253, 256-284, and 291-324; these read CLPG…GRYC, CIRY…GLFC, and CTHH…GANC. Residues 331–362 enclose the EGF-like 4; calcium-binding domain; sequence CAPSPCRNGGSCTDLEDSYSCTCPPGFYGKVC. 2 consecutive EGF-like domains span residues 369-401 and 408-439; these read CADG…GFNC and CSSS…GRYC. An EGF-like 7; calcium-binding domain is found at 446–477; that stretch reads CASSPCANGGTCRDSVNDFSCTCPPGYTGRNC. The N-linked (GlcNAc...) asparagine glycan is linked to N476. Residues 484–515 form the EGF-like 8 domain; the sequence is CEHAPCHNGATCHQRGQRYMCECAQGYGGANC. A helical transmembrane segment spans residues 538 to 560; that stretch reads VAVCAGVVLVLLLLLGCAAVVVC. The Cytoplasmic segment spans residues 561–714; it reads VRLKLQKHQP…KDECVIATEV (154 aa). K605 participates in a covalent cross-link: Glycyl lysine isopeptide (Lys-Gly) (interchain with G-Cter in ubiquitin). T630 carries the phosphothreonine modification. Positions 644-656 are enriched in basic and acidic residues; it reads ATVRDAHSKRDTK. The disordered stretch occupies residues 644-690; that stretch reads ATVRDAHSKRDTKCQSQGSVGEEKSTSTLRGGEVPDRKRPESVYSTS. S685 is modified (phosphoserine; by PKB). Phosphoserine is present on S688. Residues 711-714 form an interaction with MAGI1 region; it reads ATEV.

Homodimer. Interacts with TJP1. Interacts with MAGI1 (via PDZ domain); forms a complex with CTNNB1 and CDH2 and promotes recruitment to the adherens junction and stabilization on the cell surface. Interacts with PSEN1; undergoes a presenilin-dependent gamma-secretase cleavage that releases a Dll1-intracellular form. Interacts with MFAP5. Interacts with MIB1. Interacts with NEURL1B; leads to ubiquitination. Interacts with NEURL1. Interacts with SYNJ2BP; enhances DLL1 protein stability, and promotes Notch signaling in endothelial cells. Interacts with MAGI1, MAGI2, MAGI3 and MPDZ. Interacts (via ubiquitin) with EPN1 (via IUM domain); binding with NOTCH1 attached to neighboring cell, promotes ligand ubiquitination and EPN1 interaction, leading to NECD transendocytosis and Notch signaling. Interacts with NOTCH1. In terms of processing, ubiquitinated by MIB (MIB1 or MIB2), leading to its endocytosis and subsequent degradation. Ubiquitinated; promotes recycling back to the plasma membrane and confers a strong affinity for NOTCH1. Mono- and multi-ubiquitinated. Multi-ubiquitination of Lys-605 by MIB1 promotes both cis and trans-interaction with NOTCH1, as well as activation of Notch signaling. Ubiquitinated by NEURL1B. Phosphorylated in a membrane association-dependent manner. Phosphorylation at Ser-688 requires the presence of Ser-685, whereas phosphorylation at Thr-630 and Ser-685 occur independently of the other sites. Phosphorylation is required for full ligand activity in vitro and affects surface presentation, ectodomain shedding, and endocytosis. Post-translationally, O-fucosylated. Can be elongated to a disaccharide by MFNG.

The protein localises to the apical cell membrane. It is found in the cell junction. The protein resides in the adherens junction. It localises to the membrane raft. Functionally, transmembrane ligand protein of NOTCH1, NOTCH2 and NOTCH3 receptors that binds the extracellular domain (ECD) of Notch receptor in a cis and trans fashion manner. Following transinteraction, ligand cells produce mechanical force that depends of a clathrin-mediated endocytosis, requiring ligand ubiquitination, EPN1 interaction, and actin polymerisation; these events promote Notch receptor extracellular domain (NECD) transendocytosis and triggers Notch signaling through induction of cleavage, hyperphosphorylation, and nuclear accumulation of the intracellular domain of Notch receptors (NICD). Is required for embryonic development and maintenance of adult stem cells in many different tissues and immune systeme; the DLL1-induced Notch signaling is mediated through an intercellular communication that regulates cell lineage, cell specification, cell patterning and morphogenesis through effects on differentiation and proliferation. Plays a role in brain development at different level, namely by regulating neuronal differentiation of neural precursor cells via cell-cell interaction, most likely through the lateral inhibitory system in an endogenous level dependent-manner. During neocortex development, Dll1-Notch signaling transmission is mediated by dynamic interactions between intermediate neurogenic progenitors and radial glia; the cell-cell interactions are mediated via dynamic and transient elongation processes, likely to reactivate/maintain Notch activity in neighboring progenitors, and coordinate progenitor cell division and differentiation across radial and zonal boundaries. During cerebellar development, regulates Bergmann glial monolayer formation and its morphological maturation through a Notch signaling pathway. At the retina and spinal cord level, regulates neurogenesis by preventing the premature differentiation of neural progenitors and also by maintaining progenitors in spinal cord through Notch signaling pathway. Also controls neurogenesis of the neural tube in a progenitor domain-specific fashion along the dorsoventral axis. Maintains quiescence of neural stem cells and plays a role as a fate determinant that segregates asymmetrically to one daughter cell during neural stem cells mitosis, resulting in neuronal differentiation in Dll1-inheriting cell. Plays a role in immune systeme development, namely the development of all T-cells and marginal zone (MZ) B cells. Blocks the differentiation of progenitor cells into the B-cell lineage while promoting the emergence of a population of cells with the characteristics of a T-cell/NK-cell precursor. Also plays a role during muscle development. During early development, inhibits myoblasts differentiation from the medial dermomyotomal lip and later regulates progenitor cell differentiation. Directly modulates cell adhesion and basal lamina formation in satellite cells through Notch signaling. Maintains myogenic progenitors pool by suppressing differentiation through down-regulation of MYOD1 and is required for satellite cell homing and PAX7 expression. During craniofacial and trunk myogenesis suppresses differentiation of cranial mesoderm-derived and somite-derived muscle via MYOD1 regulation but in cranial mesoderm-derived progenitors, is neither required for satellite cell homing nor for PAX7 expression. Also plays a role during pancreatic cell development. During type B pancreatic cell development, may be involved in the initiation of proximodistal patterning in the early pancreatic epithelium. Stimulates multipotent pancreatic progenitor cells proliferation and pancreatic growth by maintaining HES1 expression and PTF1A protein levels. During fetal stages of development, is required to maintain arterial identity and the responsiveness of arterial endothelial cells for VEGFA through regulation of KDR activation and NRP1 expression. Controls sprouting angiogenesis and subsequent vertical branch formation through regulation on tip cell differentiation. Negatively regulates goblet cell differentiation in intestine and controls secretory fat commitment through lateral inhibition in small intestine. Plays a role during inner ear development; negatively regulates auditory hair cell differentiation. Plays a role during nephron development through Notch signaling pathway. Regulates growth, blood pressure and energy homeostasis. In Rattus norvegicus (Rat), this protein is Delta-like protein 1 (Dll1).